The following is a 152-amino-acid chain: Leptin (152 aa).

A signal peptide spans 1-26; the sequence is MDHILALVLALLPLSLCVALPGALDA. Residues Cys109 and Cys152 are joined by a disulfide bond.

It belongs to the leptin family. In terms of tissue distribution, expressed mostly in the liver.

The protein localises to the secreted. May function as part of a signaling pathway that acts to regulate the size of the body fat depot. The sequence is that of Leptin (lep) from Takifugu rubripes (Japanese pufferfish).